An 855-amino-acid chain; its full sequence is Glucans biosynthesis glucosyltransferase H (855 aa).

6 helical membrane-spanning segments follow: residues 142–162 (ILLTLMIGQTLVAGWYMKGIL), 196–216 (ILVLFGILFCWVSAGFWTALM), 515–535 (VFLTGVMSYLSAPLWFLFLVL), 572–592 (LFSTTIVLLFLPKLLSVILIW), 606–626 (TLSMLLEMLFSMLLAPVRMIF), and 682–702 (FLWWLAPIVGSLVLSIPVSVI).

It belongs to the glycosyltransferase 2 family. OpgH subfamily.

The protein resides in the cell inner membrane. Its pathway is glycan metabolism; osmoregulated periplasmic glucan (OPG) biosynthesis. Involved in the biosynthesis of osmoregulated periplasmic glucans (OPGs). The sequence is that of Glucans biosynthesis glucosyltransferase H from Pseudomonas entomophila (strain L48).